A 97-amino-acid polypeptide reads, in one-letter code: MKRICSVYKSPRKSEMYLYVDKREALSRVPEALLVPFGAPQHVFDLLLTPERQLAREDVAKVLENIEKQGFHLQMPPGEEEYIEHLPEELLRMNDPL.

The region spanning 3-87 (RICSVYKSPR…GEEEYIEHLP (85 aa)) is the YcgL domain.

The chain is YcgL domain-containing protein PA1295 from Pseudomonas aeruginosa (strain ATCC 15692 / DSM 22644 / CIP 104116 / JCM 14847 / LMG 12228 / 1C / PRS 101 / PAO1).